A 446-amino-acid polypeptide reads, in one-letter code: StAR-related lipid transfer protein 3 (446 aa).

Topologically, residues 1–52 (MSKRPGDLACDLERSLPALASLGTSLSHSQSLSSHFIPPPLEKRRAISDVRR) are cytoplasmic. The MENTAL domain occupies 47–218 (ISDVRRTFCL…YSPPESFAGS (172 aa)). Residues 53-73 (TFCLFVTFDLLFISLLWIIEL) form a helical membrane-spanning segment. Residues 74–95 (NTNTGIRKNLEQEVIHYSFQSS) are Extracellular-facing. Residues 96 to 116 (FFDIFVLAFFRFSGLLLGYAV) traverse the membrane as a helical segment. Residues 117 to 121 (LRLQH) are Cytoplasmic-facing. A helical transmembrane segment spans residues 122–142 (WWVIAVTTLVSSAFLIVKVIL). Residues 143–149 (SELLSKG) are Extracellular-facing. The chain crosses the membrane as a helical span at residues 150 to 170 (AFGYLLPIVSFVLAWLETWFL). The Cytoplasmic portion of the chain corresponds to 171 to 446 (DFKVLPQEAE…QRVGELGARA (276 aa)). Residues 207 to 213 (QFYSPPE) carry the FFAT motif. Phosphoserine occurs at positions 210, 218, and 222. The 214-residue stretch at 231–444 (SFSAQEREYI…LRQRVGELGA (214 aa)) folds into the START domain.

Belongs to the STARD3 family. Homodimer. Interacts (via the MENTAL domain) with STARD3NL. Interacts (via phosphorylated FFAT motif) with VAPA (via MSP domain). Interacts (via phosphorylated FFAT motif) with VAPB (via MSP domain). Interacts (via phosphorylated FFAT motif) with MOSPD2 (via MSP domain); this interaction allows enrichment of MOSPD2 around endosomes. Phosphorylation at Ser-210 is necessary and sufficient for the direct interaction of the phosphorylated FFAT motif with the MSP domain of MOSPD2, VAPA and VAPB and allows the tethering of two membranes that participates in the formation of ER-endosome contacts. Phosphorylation of the FFAT motif leads to conformation changes. Additional phosphorylations around the core FFAT motif (QFYSPPE) are not essential but strengthen the interaction with MOSPD2, VAPA and VAPB. Phosphorylation at Ser-210 of FFAT motif drives membrane tethering between the endoplasmic reticulum and late endosomes via interaction with VAPA and VAPB that in turn allows the efficient transport of sterol mediated by the START domain.

The protein resides in the late endosome membrane. It carries out the reaction cholesterol(in) = cholesterol(out). Its function is as follows. Sterol-binding protein that mediates cholesterol transport from the endoplasmic reticulum to endosomes. The sterol transport mechanism is triggered by phosphorylation of FFAT motif that leads to membrane tethering between the endoplasmic reticulum and late endosomes via interaction with VAPA and VAPB. Acts as a lipid transfer protein that redirects sterol to the endosome at the expense of the cell membrane and favors membrane formation inside endosomes. May also mediate cholesterol transport between other membranes, such as mitochondria membrane or cell membrane. However, such results need additional experimental evidences; probably mainly mediates cholesterol transport from the endoplasmic reticulum to endosomes. Does not activate transcriptional cholesterol sensing. Able to bind other lipids, such as lutein, a xanthophyll carotenoids that form the macular pigment of the retina. The polypeptide is StAR-related lipid transfer protein 3 (Mus musculus (Mouse)).